The following is a 332-amino-acid chain: MKTLGEFIVEKQHDFPHATGELTALISAIKLGAKIIHRDINKAGLVDILGASGVENIQGEQQMKLDLYANEKLKAALKARGIVAGIASEEEDEIVIFEGVENGKYVVLMDPLDGSSNIDVNVSVGTIFSIYRRITPAGTPVTEEDFLQPGSQQVAAGYVVYGSSTMLVYTTGYGVHAFTYDPSLGVFCLSAERMTFPENGYTYSINEGNYIRFPQGVKKYLKFCQEEDKATRRPYTSRYIGSLVADFHRNLLKGGIYLYPSTASHPQGKLRLLYECNPMAFLAEQAGGKASDGKNRILDLVPETLHQRSPFFVGNDHMVNDTERFLREYPDN.

4 residues coordinate Mg(2+): glutamate 89, aspartate 110, leucine 112, and aspartate 113. Substrate contacts are provided by residues aspartate 113–serine 116, asparagine 206, tyrosine 239, tyrosine 257–tyrosine 259, and lysine 269. Glutamate 275 serves as a coordination point for Mg(2+).

Belongs to the FBPase class 1 family. In terms of assembly, homotetramer. The cofactor is Mg(2+).

It localises to the cytoplasm. The catalysed reaction is beta-D-fructose 1,6-bisphosphate + H2O = beta-D-fructose 6-phosphate + phosphate. Its pathway is carbohydrate biosynthesis; gluconeogenesis. The chain is Fructose-1,6-bisphosphatase class 1 from Erwinia tasmaniensis (strain DSM 17950 / CFBP 7177 / CIP 109463 / NCPPB 4357 / Et1/99).